Consider the following 57-residue polypeptide: MAEVRLGENESIESALRRFKKKIQKAGILSEVKRRERYEKPSLRRKRKQEAARKRNR.

Residues 35–57 form a disordered region; sequence RERYEKPSLRRKRKQEAARKRNR.

Belongs to the bacterial ribosomal protein bS21 family.

In Thermosynechococcus vestitus (strain NIES-2133 / IAM M-273 / BP-1), this protein is Small ribosomal subunit protein bS21.